Reading from the N-terminus, the 529-residue chain is uncharacterized protein (529 aa).

The chain crosses the membrane as a helical span at residues 354 to 373; the sequence is FHVASFPWISWAILGSYIML.

It localises to the host membrane. This is an uncharacterized protein from Acidianus convivator (ATV).